Here is a 296-residue protein sequence, read N- to C-terminus: MAAGGPGAGSAAPVSSTSSLPLAALNMRVRRRLSLFLNVRTQVAADWTALAEEMDFEYLEIRQLETQADPTGRLLDAWQGRPGASVGRLLELLTKLGRDDVLLELGPSIEEDCQKYILKQQQEEAEKPLQVAAVDSSVPRTAELAGITTLDDPLGHMPERFDAFICYCPSDIQFVQEMIRQLEQTNYRLKLCVSDRDVLPGTCVWSIASELIEKRCRRMVVVVSDDYLQSKECDFQTKFALSLSPGAHQKRLIPIKYKAMKKEFPSILRFITVCDYTNPCTKSWFWTRLAKALSLP.

In terms of domain architecture, Death spans 54 to 109; the sequence is MDFEYLEIRQLETQADPTGRLLDAWQGRPGASVGRLLELLTKLGRDDVLLELGPSI. The segment at 110–155 is intermediate domain; that stretch reads EEDCQKYILKQQQEEAEKPLQVAAVDSSVPRTAELAGITTLDDPLG. The TIR domain occupies 159 to 293; the sequence is ERFDAFICYC…WFWTRLAKAL (135 aa). Residue serine 244 is modified to Phosphoserine.

Homodimer. Also forms heterodimers with TIRAP. Binds to TLR2, TLR5, IRAK1, IRAK2 and IRAK4 via their respective TIR domains. Interacts with IL18R1. Interacts with BMX, IL1RL1, IKBKE and IRF7. Interacts with LRRFIP1 and LRRFIP2; this interaction positively regulates Toll-like receptor (TLR) signaling in response to agonist. Interacts with FLII. LRRFIP1 and LRRFIP2 compete with FLII for MYD88-binding. Interacts with IRF1. Upon IL1B treatment, forms a complex with PELI1, IRAK1, IRAK4 and TRAF6; this complex recruits MAP3K7/TAK1, TAB1 and TAB2 to mediate NF-kappa-B activation. Direct binding of SMAD6 to PELI1 prevents the complex formation and hence negatively regulates IL1R-TLR signaling and eventually NF-kappa-B-mediated gene expression. May interact with PIK3AP1. Interacts (via TIR domain) with DHX9 (via H2A and OB-fold regions); this interaction is direct. Interacts with OTUD4 deubiquitinase; the interaction is direct. Interacts with TLR4. As to quaternary structure, (Microbial infection) In case of infection, interacts with uropathogenic E.coli protein TcpC; suppressing Toll-like receptor (TLR)-mediated cytokine production. In terms of assembly, (Microbial infection) In case of infection, interacts with uropathogenic E.faecalis protein TcpF; suppressing Toll-like receptor (TLR)-mediated cytokine production. (Microbial infection) In case of infection, interacts with B.melitensis protein TcpB. As to quaternary structure, (Microbial infection) Interacts with human metapneumovirus protein M2-2; this interaction prevents MYD88-mediated cytokine secretion. Ubiquitinated; undergoes 'Lys-63'-linked polyubiquitination. OTUD4 specifically hydrolyzes 'Lys-63'-linked polyubiquitinated MYD88. Deubiquitinated by USP3 that cleaves 'Lys-63'-linked ubiquitin chains leading to inhibition of MYD88-induced NF-kappa-B signaling. Post-translationally, (Microbial infection) Ubiquitinated by human herpesvirus 8 (KSHV) protein RTA/ORF50, leading to proteasomal degradation ans suppression of TLR4 signaling pathway. As to expression, ubiquitous.

The protein resides in the cytoplasm. It localises to the nucleus. Functionally, adapter protein involved in the Toll-like receptor and IL-1 receptor signaling pathway in the innate immune response. Acts via IRAK1, IRAK2, IRF7 and TRAF6, leading to NF-kappa-B activation, cytokine secretion and the inflammatory response. Increases IL-8 transcription. Involved in IL-18-mediated signaling pathway. Activates IRF1 resulting in its rapid migration into the nucleus to mediate an efficient induction of IFN-beta, NOS2/INOS, and IL12A genes. Upon TLR8 activation by GU-rich single-stranded RNA (GU-rich RNA) derived from viruses such as SARS-CoV-2, SARS-CoV and HIV-1, induces IL1B release through NLRP3 inflammasome activation. MyD88-mediated signaling in intestinal epithelial cells is crucial for maintenance of gut homeostasis and controls the expression of the antimicrobial lectin REG3G in the small intestine. This Homo sapiens (Human) protein is Myeloid differentiation primary response protein MyD88.